A 2005-amino-acid chain; its full sequence is Structural maintenance of chromosomes flexible hinge domain-containing protein 1 (2005 aa).

Positions 1-13 are enriched in gly residues; that stretch reads MAAADGGGPGGAS. Residues 1-23 are disordered; the sequence is MAAADGGGPGGASVGTEEDGGGV. Position 2 is an N-acetylalanine (Ala2). Residues 111–702 are ATPase activity domain; it reads TKERIDFLPH…LSVTWPEGDE (592 aa). An N6-acetyllysine modification is found at Lys1349. Residues Lys1374 and Lys1496 each participate in a glycyl lysine isopeptide (Lys-Gly) (interchain with G-Cter in SUMO2) cross-link. Thr1499 carries the phosphothreonine modification. Residues 1720-1847 form the SMC hinge domain; that stretch reads GDVLGKIAHL…DNLDAANHYR (128 aa). Position 1802 is an N6-succinyllysine (Lys1802). Ser1974 carries the phosphoserine modification.

The protein belongs to the SMC family. Highly divergent. In terms of assembly, homodimer; homodimerizes via its SMC hinge domain. Interacts with LRIF1. Post-translationally, sumoylated with SUMO1.

Its subcellular location is the chromosome. It catalyses the reaction ATP + H2O = ADP + phosphate + H(+). Non-canonical member of the structural maintenance of chromosomes (SMC) protein family that plays a key role in epigenetic silencing by regulating chromatin architecture. Promotes heterochromatin formation in both autosomes and chromosome X, probably by mediating the merge of chromatin compartments. Plays a key role in chromosome X inactivation in females by promoting the spreading of heterochromatin. Recruited to inactivated chromosome X by Xist RNA and acts by mediating the merge of chromatin compartments: promotes random chromatin interactions that span the boundaries of existing structures, leading to create a compartment-less architecture typical of inactivated chromosome X. Required to facilitate Xist RNA spreading. Also required for silencing of a subset of clustered autosomal loci in somatic cells, such as the DUX4 locus. Has ATPase activity; may participate in structural manipulation of chromatin in an ATP-dependent manner as part of its role in gene expression regulation. Also plays a role in DNA repair: localizes to sites of DNA double-strand breaks in response to DNA damage to promote the repair of DNA double-strand breaks. Acts by promoting non-homologous end joining (NHEJ) and inhibiting homologous recombination (HR) repair. The sequence is that of Structural maintenance of chromosomes flexible hinge domain-containing protein 1 from Homo sapiens (Human).